Reading from the N-terminus, the 178-residue chain is tRNA (cytidine(56)-2'-O)-methyltransferase (178 aa).

S-adenosyl-L-methionine contacts are provided by residues Leu-84, 112–116 (GAEKV), and 130–137 (VGNQPHSE).

It belongs to the aTrm56 family. In terms of assembly, homodimer.

It localises to the cytoplasm. It catalyses the reaction cytidine(56) in tRNA + S-adenosyl-L-methionine = 2'-O-methylcytidine(56) in tRNA + S-adenosyl-L-homocysteine + H(+). Functionally, specifically catalyzes the AdoMet-dependent 2'-O-ribose methylation of cytidine at position 56 in tRNAs. The polypeptide is tRNA (cytidine(56)-2'-O)-methyltransferase (Methanocella arvoryzae (strain DSM 22066 / NBRC 105507 / MRE50)).